The chain runs to 41 residues: uncharacterized protein (41 aa).

Residues 1–12 (MTRNVVRQEFEA) are compositionally biased toward basic and acidic residues. The disordered stretch occupies residues 1–23 (MTRNVVRQEFEAPGKPQDSSQQD).

This is an uncharacterized protein from Homo sapiens (Human).